The primary structure comprises 274 residues: ATP synthase subunit delta (274 aa).

The protein belongs to the ATPase delta chain family. As to quaternary structure, F-type ATPases have 2 components, F(1) - the catalytic core - and F(0) - the membrane proton channel. F(1) has five subunits: alpha(3), beta(3), gamma(1), delta(1), epsilon(1). F(0) has three main subunits: a(1), b(2) and c(10-14). The alpha and beta chains form an alternating ring which encloses part of the gamma chain. F(1) is attached to F(0) by a central stalk formed by the gamma and epsilon chains, while a peripheral stalk is formed by the delta and b chains.

It localises to the cell membrane. F(1)F(0) ATP synthase produces ATP from ADP in the presence of a proton or sodium gradient. F-type ATPases consist of two structural domains, F(1) containing the extramembraneous catalytic core and F(0) containing the membrane proton channel, linked together by a central stalk and a peripheral stalk. During catalysis, ATP synthesis in the catalytic domain of F(1) is coupled via a rotary mechanism of the central stalk subunits to proton translocation. In terms of biological role, this protein is part of the stalk that links CF(0) to CF(1). It either transmits conformational changes from CF(0) to CF(1) or is implicated in proton conduction. The polypeptide is ATP synthase subunit delta (Acidothermus cellulolyticus (strain ATCC 43068 / DSM 8971 / 11B)).